A 171-amino-acid chain; its full sequence is Endoribonuclease YbeY (171 aa).

Positions 115, 119, and 125 each coordinate Zn(2+).

The protein belongs to the endoribonuclease YbeY family. Zn(2+) serves as cofactor.

It localises to the cytoplasm. Its function is as follows. Single strand-specific metallo-endoribonuclease involved in late-stage 70S ribosome quality control and in maturation of the 3' terminus of the 16S rRNA. The sequence is that of Endoribonuclease YbeY from Tropheryma whipplei (strain TW08/27) (Whipple's bacillus).